The following is a 297-amino-acid chain: Guanylate kinase (297 aa).

In terms of domain architecture, Guanylate kinase-like spans 4–183 (GKMIIISGPS…AVAKITDVLH (180 aa)). 11 to 18 (GPSGVGKG) provides a ligand contact to ATP. Positions 204 to 297 (EQIVKEKYMY…EQKHYNNDEF (94 aa)) are unknown.

Belongs to the guanylate kinase family.

The protein resides in the cytoplasm. It carries out the reaction GMP + ATP = GDP + ADP. Functionally, essential for recycling GMP and indirectly, cGMP. The chain is Guanylate kinase (gmk) from Mycoplasma capricolum subsp. capricolum (strain California kid / ATCC 27343 / NCTC 10154).